The following is a 156-amino-acid chain: Small ribosomal subunit protein uS7 (156 aa).

It belongs to the universal ribosomal protein uS7 family. Part of the 30S ribosomal subunit. Contacts proteins S9 and S11.

Its function is as follows. One of the primary rRNA binding proteins, it binds directly to 16S rRNA where it nucleates assembly of the head domain of the 30S subunit. Is located at the subunit interface close to the decoding center, probably blocks exit of the E-site tRNA. In Acholeplasma laidlawii (strain PG-8A), this protein is Small ribosomal subunit protein uS7.